We begin with the raw amino-acid sequence, 32 residues long: Calcitonin (32 aa).

A disulfide bond links C1 and C7. The residue at position 32 (P32) is a Proline amide.

The protein belongs to the calcitonin family.

The protein resides in the secreted. Functionally, calcitonin is a peptide hormone that causes a rapid but short-lived drop in the level of calcium and phosphate in blood by promoting the incorporation of those ions in the bones. Calcitonin function is mediated by the calcitonin receptor/CALCR and the CALCR-RAMP2 (AMYR2) receptor complex. This is Calcitonin (CALCA) from Bos taurus (Bovine).